The sequence spans 91 residues: Small ribosomal subunit protein uS19 (91 aa).

The protein belongs to the universal ribosomal protein uS19 family.

Protein S19 forms a complex with S13 that binds strongly to the 16S ribosomal RNA. The chain is Small ribosomal subunit protein uS19 from Colwellia psychrerythraea (strain 34H / ATCC BAA-681) (Vibrio psychroerythus).